We begin with the raw amino-acid sequence, 313 residues long: 4-diphosphocytidyl-2-C-methyl-D-erythritol kinase (313 aa).

K29 is a catalytic residue. 113-123 provides a ligand contact to ATP; sequence PMGGGVGGGSS. Residue D155 is part of the active site.

This sequence belongs to the GHMP kinase family. IspE subfamily.

It carries out the reaction 4-CDP-2-C-methyl-D-erythritol + ATP = 4-CDP-2-C-methyl-D-erythritol 2-phosphate + ADP + H(+). Its pathway is isoprenoid biosynthesis; isopentenyl diphosphate biosynthesis via DXP pathway; isopentenyl diphosphate from 1-deoxy-D-xylulose 5-phosphate: step 3/6. Catalyzes the phosphorylation of the position 2 hydroxy group of 4-diphosphocytidyl-2C-methyl-D-erythritol. The chain is 4-diphosphocytidyl-2-C-methyl-D-erythritol kinase from Haemophilus influenzae (strain ATCC 51907 / DSM 11121 / KW20 / Rd).